The chain runs to 469 residues: MIALLPFILSLAATFINIFLCVTNISKRYSINLNILFWVIIFISFFIVRSNFSNDFLMDFATPFISLDEFSFCFGVVLSALMIIFLISSFYSDDEKFYKQEMFALASLAGFGLLAMSLSVELILTLIFLEVASISIYAMIAMNSIEYKSVEAAFKYFLLSSFMSAFYLLGAAFVFGVAGSTKYSFIATGLNSDFLSIIGMILVLSMMFFKIAIFGFYRWSIDVYYGSNLNIAGFLASAFKLASFAILIKLCFLYPGNNIEILQGIFAILAILSMFAGNLLSLKETNVKKILIAAGIVHSGYIFINLSSVGASVSIYPAIFYLSTYTIVVGFLFAILNGLFGDREIKISDLNGLYKVRPTEAFAFTVICLSFIGFPYSVGFLGKLFIFSSAVESGKTYLAIFGIINTIFSVYYYLKIIISIYFSENKTALSCADSKKFGLKLLALSSILFIILEGSGIFSIISFLNLFIR.

The next 14 membrane-spanning stretches (helical) occupy residues Ile-2–Val-22, Arg-28–Val-48, Phe-70–Phe-90, Glu-101–Glu-121, Leu-122–Met-142, Phe-157–Val-177, Phe-194–Phe-214, Gly-233–Leu-253, Ile-261–Ser-281, Ile-290–Gly-310, Ile-315–Ile-335, Ala-361–Leu-381, Leu-398–Ile-418, and Ile-447–Phe-467.

Belongs to the complex I subunit 2 family. NDH-1 is composed of 14 different subunits. Subunits NuoA, H, J, K, L, M, N constitute the membrane sector of the complex.

The protein localises to the cell inner membrane. The catalysed reaction is a quinone + NADH + 5 H(+)(in) = a quinol + NAD(+) + 4 H(+)(out). NDH-1 shuttles electrons from NADH, via FMN and iron-sulfur (Fe-S) centers, to quinones in the respiratory chain. The immediate electron acceptor for the enzyme in this species is believed to be ubiquinone. Couples the redox reaction to proton translocation (for every two electrons transferred, four hydrogen ions are translocated across the cytoplasmic membrane), and thus conserves the redox energy in a proton gradient. In Campylobacter fetus subsp. fetus (strain 82-40), this protein is NADH-quinone oxidoreductase subunit N.